The primary structure comprises 98 residues: Protein translation factor SUI1 homolog (98 aa).

It belongs to the SUI1 family.

In Thermococcus onnurineus (strain NA1), this protein is Protein translation factor SUI1 homolog.